The primary structure comprises 71 residues: Movement protein TGBp3 (71 aa).

The Lumenal segment spans residues 1 to 4 (MWSD). A helical transmembrane segment spans residues 5–27 (SLVSRICVPIIVVCTSIALLNVV). The Cytoplasmic segment spans residues 28–71 (SFRSECSCVVHISGAAIDIRGCSFTPDFIEYAKTLRVFNHRYQE).

The protein belongs to the Tymovirales TGBp3 protein family.

The protein resides in the host endoplasmic reticulum membrane. In terms of biological role, plays a role in viral cell-to-cell propagation, by facilitating genome transport to neighboring plant cells through plasmosdesmata. May induce the formation of granular vesicles derived from the Endoplasmic reticulum, which align on actin filaments. The protein is Movement protein TGBp3 of Populus balsamifera (Balsam poplar).